Consider the following 335-residue polypeptide: Fructose-1,6-bisphosphatase class 1 (335 aa).

E92, D114, L116, and D117 together coordinate Mg(2+). Residues 117–120, N209, and K275 each bind substrate; that span reads DGSS. E281 contributes to the Mg(2+) binding site.

The protein belongs to the FBPase class 1 family. As to quaternary structure, homotetramer. The cofactor is Mg(2+).

The protein resides in the cytoplasm. The enzyme catalyses beta-D-fructose 1,6-bisphosphate + H2O = beta-D-fructose 6-phosphate + phosphate. Its pathway is carbohydrate biosynthesis; gluconeogenesis. The protein is Fructose-1,6-bisphosphatase class 1 of Verminephrobacter eiseniae (strain EF01-2).